A 333-amino-acid chain; its full sequence is Adenosine deaminase (333 aa).

Residues histidine 12 and histidine 14 each contribute to the Zn(2+) site. Positions 14, 16, and 170 each coordinate substrate. Residue histidine 197 coordinates Zn(2+). Residue glutamate 200 is the Proton donor of the active site. Aspartate 278 is a Zn(2+) binding site. Aspartate 279 is a substrate binding site.

It belongs to the metallo-dependent hydrolases superfamily. Adenosine and AMP deaminases family. Adenosine deaminase subfamily. Zn(2+) is required as a cofactor.

The enzyme catalyses adenosine + H2O + H(+) = inosine + NH4(+). It catalyses the reaction 2'-deoxyadenosine + H2O + H(+) = 2'-deoxyinosine + NH4(+). Its function is as follows. Catalyzes the hydrolytic deamination of adenosine and 2-deoxyadenosine. This chain is Adenosine deaminase, found in Proteus mirabilis (strain HI4320).